Consider the following 375-residue polypeptide: Succinyl-diaminopimelate desuccinylase (375 aa).

Position 66 (histidine 66) interacts with Zn(2+). Aspartate 68 is a catalytic residue. Aspartate 99 provides a ligand contact to Zn(2+). Glutamate 133 (proton acceptor) is an active-site residue. 3 residues coordinate Zn(2+): glutamate 134, glutamate 162, and histidine 348.

Belongs to the peptidase M20A family. DapE subfamily. In terms of assembly, homodimer. Requires Zn(2+) as cofactor. Co(2+) is required as a cofactor.

It catalyses the reaction N-succinyl-(2S,6S)-2,6-diaminopimelate + H2O = (2S,6S)-2,6-diaminopimelate + succinate. Its pathway is amino-acid biosynthesis; L-lysine biosynthesis via DAP pathway; LL-2,6-diaminopimelate from (S)-tetrahydrodipicolinate (succinylase route): step 3/3. Its function is as follows. Catalyzes the hydrolysis of N-succinyl-L,L-diaminopimelic acid (SDAP), forming succinate and LL-2,6-diaminopimelate (DAP), an intermediate involved in the bacterial biosynthesis of lysine and meso-diaminopimelic acid, an essential component of bacterial cell walls. This Escherichia coli O7:K1 (strain IAI39 / ExPEC) protein is Succinyl-diaminopimelate desuccinylase.